We begin with the raw amino-acid sequence, 62 residues long: Large ribosomal subunit protein uL30 (62 aa).

The protein belongs to the universal ribosomal protein uL30 family. In terms of assembly, part of the 50S ribosomal subunit.

The sequence is that of Large ribosomal subunit protein uL30 from Dinoroseobacter shibae (strain DSM 16493 / NCIMB 14021 / DFL 12).